Reading from the N-terminus, the 85-residue chain is Putative membrane protein insertion efficiency factor (85 aa).

The protein belongs to the UPF0161 family.

It is found in the cell inner membrane. Functionally, could be involved in insertion of integral membrane proteins into the membrane. The protein is Putative membrane protein insertion efficiency factor of Sodalis glossinidius (strain morsitans).